We begin with the raw amino-acid sequence, 472 residues long: Ribulose bisphosphate carboxylase large chain (472 aa).

Residues Asn-120 and Thr-170 each coordinate substrate. The active-site Proton acceptor is Lys-172. Lys-174 contacts substrate. Residues Lys-198, Asp-200, and Glu-201 each contribute to the Mg(2+) site. An N6-carboxylysine modification is found at Lys-198. His-291 acts as the Proton acceptor in catalysis. Positions 292, 324, and 376 each coordinate substrate. Positions 461-467 (EIKFEFE) match the Interacts with RbcX2 motif.

The protein belongs to the RuBisCO large chain family. Type I subfamily. As to quaternary structure, heterohexadecamer of 8 large chains and 8 small chains; disulfide-linked. The disulfide link is formed within the large subunit homodimers. The exposed C-terminus binds in a cleft in the RbcX2 (shown with endogenous and Anabaena strain CA protein). RbcX2 is displaced by RbcS; as RbcX2 is removed RbcS mediates the ordering of an internal RbcL loop (Thr-64-Leu-70) in a catalytically active conformation. Mg(2+) serves as cofactor. In terms of processing, the disulfide bond which can form in the large chain dimeric partners within the hexadecamer appears to be associated with oxidative stress and protein turnover.

The protein resides in the carboxysome. It catalyses the reaction 2 (2R)-3-phosphoglycerate + 2 H(+) = D-ribulose 1,5-bisphosphate + CO2 + H2O. It carries out the reaction D-ribulose 1,5-bisphosphate + O2 = 2-phosphoglycolate + (2R)-3-phosphoglycerate + 2 H(+). RuBisCO catalyzes two reactions: the carboxylation of D-ribulose 1,5-bisphosphate, the primary event in carbon dioxide fixation, as well as the oxidative fragmentation of the pentose substrate in the photorespiration process. Both reactions occur simultaneously and in competition at the same active site. The protein is Ribulose bisphosphate carboxylase large chain (cbbL) of Synechococcus sp. (strain ATCC 27144 / PCC 6301 / SAUG 1402/1) (Anacystis nidulans).